Reading from the N-terminus, the 258-residue chain is MGLSGKNVIFVGGLGFIGYEACKQLMAKNMASFFVFDVLDKPEDIKALQALNPKTKVYYTKFDITSKQSIKSALADVVSKVKYIDALINGAGILTDLNVELTMNINLIGLINTTLEALPLMDKNKQGRGGVIVNIASVLGLEPCPPAAVYCASKFGVMGFSRSIGDPYYYNITGVAVVTFCPGLTETPLKNNIGSKYTFEYSKKISEELNNTKTQKPEVCGAHLAQVVESHENGGIYISNQGTLAKVTPTVYWQPTYH.

I9–F33 provides a ligand contact to NAD(+). S137 is a binding site for substrate. Y150 functions as the Proton acceptor in the catalytic mechanism.

Belongs to the short-chain dehydrogenases/reductases (SDR) family. In terms of assembly, homodimer.

The catalysed reaction is a primary alcohol + NAD(+) = an aldehyde + NADH + H(+). The enzyme catalyses a secondary alcohol + NAD(+) = a ketone + NADH + H(+). This chain is Alcohol dehydrogenase 2 (ADH2), found in Ceratitis cosyra (Mango fruit fly).